The primary structure comprises 506 residues: Probable alpha-L-arabinofuranosidase B (506 aa).

The signal sequence occupies residues 1 to 26 (MLSQPSRERAFVLALGLVVSSSLAAA). Residues 27–343 (APCDIYSSGG…ADIVAANYAV (317 aa)) are catalytic. 3 cysteine pairs are disulfide-bonded: Cys-29–Cys-39, Cys-89–Cys-94, and Cys-184–Cys-185. Substrate is bound at residue Asp-227. The active-site Nucleophile is the Glu-229. Asn-230 is a substrate binding site. The N-linked (GlcNAc...) asparagine glycan is linked to Asn-285. Gly-304 serves as a coordination point for substrate. Catalysis depends on Asp-305, which acts as the Proton donor. Positions 344–506 (TSLTSGPALT…VSWVISSGFA (163 aa)) are ABD. A disulfide bridge connects residues Cys-409 and Cys-447. The substrate site is built by His-424, Asn-426, Phe-427, Asp-443, His-471, Leu-476, and Asp-496.

The protein belongs to the glycosyl hydrolase 54 family.

The protein resides in the secreted. The enzyme catalyses Hydrolysis of terminal non-reducing alpha-L-arabinofuranoside residues in alpha-L-arabinosides.. The protein operates within glycan metabolism; L-arabinan degradation. Functionally, alpha-L-arabinofuranosidase involved in the degradation of arabinoxylan, a major component of plant hemicellulose. Able to hydrolyze 1,5-, 1,3- and 1,2-alpha-linkages not only in L-arabinofuranosyl oligosaccharides, but also in polysaccharides containing terminal non-reducing L-arabinofuranoses in side chains, like L-arabinan, arabinogalactan and arabinoxylan. The protein is Probable alpha-L-arabinofuranosidase B (abfB) of Aspergillus clavatus (strain ATCC 1007 / CBS 513.65 / DSM 816 / NCTC 3887 / NRRL 1 / QM 1276 / 107).